A 474-amino-acid chain; its full sequence is Protein Rv3254 (474 aa).

A propeptide spanning residues 1 to 4 (MTGR) is cleaved from the precursor.

This chain is Protein Rv3254, found in Mycobacterium tuberculosis (strain ATCC 25618 / H37Rv).